A 317-amino-acid chain; its full sequence is 17-beta-hydroxysteroid dehydrogenase type 6 (317 aa).

An N-terminal signal peptide occupies residues 1-17; it reads MWLYLAVLLGLYYLLRW. Residue 33–57 participates in NAD(+) binding; it reads FITGCDSGFGNQLARQLDLRGLRVL. N-linked (GlcNAc...) asparagine glycans are attached at residues Asn-71 and Asn-161. Residue Ser-164 coordinates substrate. The active-site Proton acceptor is Tyr-176.

This sequence belongs to the short-chain dehydrogenases/reductases (SDR) family.

The protein resides in the microsome membrane. It is found in the endoplasmic reticulum membrane. It catalyses the reaction all-trans-retinol--[retinol-binding protein] + NAD(+) = all-trans-retinal--[retinol-binding protein] + NADH + H(+). It carries out the reaction all-trans-retinol + NAD(+) = all-trans-retinal + NADH + H(+). The catalysed reaction is androsterone + NAD(+) = 5alpha-androstan-3,17-dione + NADH + H(+). The enzyme catalyses testosterone + NAD(+) = androst-4-ene-3,17-dione + NADH + H(+). It catalyses the reaction 5alpha-androstane-3alpha,17beta-diol + NAD(+) = 17beta-hydroxy-5alpha-androstan-3-one + NADH + H(+). It carries out the reaction 17beta-estradiol + NAD(+) = estrone + NADH + H(+). The catalysed reaction is 17beta-estradiol + NADP(+) = estrone + NADPH + H(+). The enzyme catalyses 3alpha-hydroxy-5alpha-pregnan-20-one + NAD(+) = 5alpha-pregnane-3,20-dione + NADH + H(+). It catalyses the reaction 5alpha-androstane-3beta,17beta-diol + NAD(+) = 17beta-hydroxy-5alpha-androstan-3-one + NADH + H(+). It carries out the reaction 3beta-hydroxy-5alpha-androstan-17-one + NAD(+) = 5alpha-androstan-3,17-dione + NADH + H(+). NAD-dependent oxidoreductase with broad substrate specificity that shows both oxidative and reductive activity (in vitro). Has 17-beta-hydroxysteroid dehydrogenase activity towards various steroids (in vitro). Converts 5-alpha-androstan-3-alpha,17-beta-diol to androsterone and estradiol to estrone (in vitro). Has 3-alpha-hydroxysteroid dehydrogenase activity towards androsterone (in vitro). Has retinol dehydrogenase activity towards all-trans-retinol (in vitro). Can convert androsterone to epi-androsterone. Androsterone is first oxidized to 5-alpha-androstane-3,17-dione and then reduced to epi-andosterone. Can act on both C-19 and C-21 3-alpha-hydroxysteroids. In Bos taurus (Bovine), this protein is 17-beta-hydroxysteroid dehydrogenase type 6 (HSD17B6).